Reading from the N-terminus, the 179-residue chain is Large ribosomal subunit protein uL6 (179 aa).

It belongs to the universal ribosomal protein uL6 family. In terms of assembly, part of the 50S ribosomal subunit.

Its function is as follows. This protein binds to the 23S rRNA, and is important in its secondary structure. It is located near the subunit interface in the base of the L7/L12 stalk, and near the tRNA binding site of the peptidyltransferase center. This Spiroplasma kunkelii protein is Large ribosomal subunit protein uL6.